A 72-amino-acid polypeptide reads, in one-letter code: High-potential iron-sulfur protein isozyme 1 (72 aa).

Ala1 is subject to N-carbamoylalanine; partial. [4Fe-4S] cluster contacts are provided by Cys34, Cys37, Cys51, and Cys65.

Belongs to the high-potential iron-sulfur protein (HiPIP) family. Homodimer.

Functionally, specific class of high-redox-potential 4Fe-4S ferredoxins. Functions in anaerobic electron transport in most purple and in some other photosynthetic bacteria and in at least one genus (Paracoccus) of halophilic, denitrifying bacteria. This is High-potential iron-sulfur protein isozyme 1 from Ectothiorhodospira mobilis.